The sequence spans 526 residues: Rho guanine nucleotide exchange factor 3 (526 aa).

The interval 20 to 40 is disordered; sequence ELPPASGPAKDAEEPSNKRVK. Phosphoserine occurs at positions 47 and 70. Positions 122 to 304 constitute a DH domain; it reads KRQEAIFELS…QGIVAEINTK (183 aa). In terms of domain architecture, PH spans 291–449; sequence INIIQGIVAE…WLNCIRQAKE (159 aa). 2 disordered regions span residues 464 to 502 and 507 to 526; these read EGSFLNPTTGSRELQGETKLEQMDQSDSESDCSMDTSEV and EHMEQTDSSCGNSRHGESNV. Positions 466-475 are enriched in polar residues; the sequence is SFLNPTTGSR.

In terms of assembly, interacts with RHOA and RHOB.

It is found in the cytoplasm. In terms of biological role, acts as a guanine nucleotide exchange factor (GEF) for RhoA and RhoB GTPases. This is Rho guanine nucleotide exchange factor 3 (ARHGEF3) from Macaca fascicularis (Crab-eating macaque).